Consider the following 522-residue polypeptide: Gypsy retrotransposon integrase-like protein 1 (522 aa).

The 158-residue stretch at K135–N292 folds into the Integrase catalytic domain. At S502 the chain carries Phosphoserine.

The sequence is that of Gypsy retrotransposon integrase-like protein 1 (GIN1) from Pongo abelii (Sumatran orangutan).